Reading from the N-terminus, the 412-residue chain is Odorant receptor 47b (412 aa).

Residues 1–74 (MNDSGYQSNL…NLFIMCNVMT (74 aa)) are Cytoplasmic-facing. A helical membrane pass occupies residues 75–95 (IFWTMFVALPESKNVIEMGDD). Residues 96–103 (LVWISGMA) lie on the Extracellular side of the membrane. Residues 104–124 (LVFTKIFYMHLRCDEIDELIS) traverse the membrane as a helical segment. Residues 125–169 (DFEYYNRELRPHNIDEEVLGWQRLCYVIESGLYINCFCLVNFFSA) lie on the Cytoplasmic side of the membrane. The helical transmembrane segment at 170–190 (AIFLQPLLGEGKLPFHSVYPF) threads the bilayer. Topologically, residues 191-229 (QWHRLDLHPYTFWFLYIWQSLTSQHNLMSILMVDMVGIS) are extracellular. Residues 230–250 (TFLQTALNLKLLCIEIRKLGD) traverse the membrane as a helical segment. The Cytoplasmic segment spans residues 251-302 (MEVSDKRFHEEFCRVVRFHQHIIKLVGKANRAFNGAFNAQLMASFSLISIST). A helical transmembrane segment spans residues 303 to 323 (FETMAAAAVDPKMAAKFVLLM). Topologically, residues 324-330 (LVAFIQL) are extracellular. A helical membrane pass occupies residues 331–351 (SLWCVSGTLVYTQSVEVAQAA). Over 352–389 (FDINDWHTKSPGIQRDISFVILRAQKPLMYVAEPFLPF) the chain is Cytoplasmic. Residues 390 to 410 (TLGTYMLVLKNCYRLLALMQE) form a helical membrane-spanning segment. The Extracellular portion of the chain corresponds to 411–412 (SM).

This sequence belongs to the insect chemoreceptor superfamily. Heteromeric odorant receptor channel (TC 1.A.69) family. Or49a subfamily. In terms of assembly, interacts with Orco. Complexes exist early in the endomembrane system in olfactory sensory neurons (OSNs), coupling these complexes to the conserved ciliary trafficking pathway. As to expression, expressed in olfactory sensory neurons in the antenna.

The protein resides in the cell membrane. Functionally, odorant receptor which mediates acceptance or avoidance behavior, depending on its substrates. The odorant receptor repertoire encodes a large collection of odor stimuli that vary widely in identity, intensity, and duration. May form a complex with Orco to form odorant-sensing units, providing sensitive and prolonged odorant signaling and calcium permeability. Plays an important role in sociosexual interactions since its enhances courtship in a pheromone-dependent manner. The chain is Odorant receptor 47b (Or47b) from Drosophila melanogaster (Fruit fly).